A 311-amino-acid chain; its full sequence is Phospholipid phosphatase 3 (311 aa).

The Cytoplasmic segment spans residues 1–33 (MQNYKYDKAIVAESKNGGSPALNNNPRKGGSKR). Residue Ser19 is modified to Phosphoserine. A helical membrane pass occupies residues 34 to 54 (VLLICLDLFCLFMAGLPFIII). The Extracellular segment spans residues 55–85 (ETSTIKPYHRGFYCNDESIKYPQKTGETIND). A helical membrane pass occupies residues 86–106 (AVLTAVGIVIAILAIITGEFY). The Cytoplasmic portion of the chain corresponds to 107–123 (RIYYLKEKSRSTIQNPY). A Dityrosine basolateral targeting motif motif is present at residues 109-110 (YY). Residues 124–144 (VAALYKQVGCFLFGCAISQSF) traverse the membrane as a helical segment. The Extracellular portion of the chain corresponds to 145 to 194 (TDIAKVSIGRLRPHFLNVCNPDFSQINCSVGYIQNYRCRGEDSKVQEARK). Residues 149 to 157 (KVSIGRLRP) are phosphatase sequence motif I. N-linked (GlcNAc...) asparagine glycosylation occurs at Asn171. The short motif at 183–185 (RGE) is the Integrin-binding motif element. Residues 195 to 215 (SFFSGHASFSMYTMLYLVLYL) form a helical membrane-spanning segment. Residues 197–200 (FSGH) form a phosphatase sequence motif II region. His200 acts as the Proton donors in catalysis. At 216 to 226 (QARFTWRGARL) the chain is on the cytoplasmic side. Residues 227 to 244 (LRPLLQFTLIMMAFYTGL) form a helical membrane-spanning segment. The tract at residues 245 to 256 (SRVSDHKHHPSD) is phosphatase sequence motif III. Residues 245–258 (SRVSDHKHHPSDVL) are Extracellular-facing. His252 serves as the catalytic Nucleophile. The chain crosses the membrane as a helical span at residues 259 to 279 (AGFAQGALVACCIVFFVSDLF). Residues 276 to 311 (SDLFKTKTTLSLPPSAIRKDMLSPVDIDRSNHHNMV) are mediates interaction with CTNND1. Residues 280–311 (KTKTTLSLPPSAIRKDMLSPVDIDRSNHHNMV) lie on the Cytoplasmic side of the membrane.

The protein belongs to the PA-phosphatase related phosphoesterase family. As to quaternary structure, forms functional homodimers and homooligomers that are not required for substrate recognition and catalytic activity. Can also form heterooligomers with other PLPP2 and PLPP3. Interacts with CTNND1; negatively regulates the PLPP3-mediated stabilization of beta-catenin/CTNNB1. N-glycosylated. Contains high-mannose oligosaccharides.

It localises to the cell membrane. The protein resides in the basolateral cell membrane. It is found in the endoplasmic reticulum membrane. The protein localises to the endoplasmic reticulum-Golgi intermediate compartment membrane. Its subcellular location is the golgi apparatus membrane. It localises to the golgi apparatus. The protein resides in the trans-Golgi network membrane. It is found in the membrane raft. It catalyses the reaction a 1,2-diacyl-sn-glycero-3-phosphate + H2O = a 1,2-diacyl-sn-glycerol + phosphate. The catalysed reaction is 1,2-dihexadecanoyl-sn-glycero-3-phosphate + H2O = 1,2-dihexadecanoyl-sn-glycerol + phosphate. The enzyme catalyses 1,2-di-(9Z-octadecenoyl)-sn-glycero-3-phosphate + H2O = 1,2-di-(9Z-octadecenoyl)-sn-glycerol + phosphate. It carries out the reaction a monoacyl-sn-glycero-3-phosphate + H2O = a monoacylglycerol + phosphate. It catalyses the reaction (9Z)-octadecenoyl-sn-glycero-3-phosphate + H2O = (9Z-octadecenoyl)-glycerol + phosphate. The catalysed reaction is sphing-4-enine 1-phosphate + H2O = sphing-4-enine + phosphate. The enzyme catalyses an N-acylsphing-4-enine 1-phosphate + H2O = an N-acylsphing-4-enine + phosphate. It carries out the reaction N-(octanoyl)-sphing-4-enine-1-phosphate + H2O = N-octanoylsphing-4-enine + phosphate. It catalyses the reaction N-(9Z-octadecenoyl)-ethanolamine phosphate + H2O = N-(9Z-octadecenoyl) ethanolamine + phosphate. The protein operates within lipid metabolism; phospholipid metabolism. Its activity is regulated as follows. Magnesium-independent phospholipid phosphatase. Insensitive to N-ethylmaleimide. Inhibited by sphingosine, zinc ions and modestly by propanolol. Functionally, magnesium-independent phospholipid phosphatase of the plasma membrane that catalyzes the dephosphorylation of a variety of glycerolipid and sphingolipid phosphate esters including phosphatidate/PA, lysophosphatidate/LPA, diacylglycerol pyrophosphate/DGPP, sphingosine 1-phosphate/S1P and ceramide 1-phosphate/C1P. Also acts on N-oleoyl ethanolamine phosphate/N-(9Z-octadecenoyl)-ethanolamine phosphate, a potential physiological compound. Has both an extracellular and an intracellular phosphatase activity, allowing the hydrolysis and the cellular uptake of these bioactive lipid mediators from the milieu, regulating signal transduction in different cellular processes. Through the dephosphorylation of extracellular sphingosine-1-phosphate and the regulation of its extra- and intracellular availability, plays a role in vascular homeostasis, regulating endothelial cell migration, adhesion, survival, proliferation and the production of pro-inflammatory cytokines. By maintaining the appropriate levels of this lipid in the cerebellum, also ensure its proper development and function. Through its intracellular lipid phosphatase activity may act in early compartments of the secretory pathway, regulating the formation of Golgi to endoplasmic reticulum retrograde transport carriers. In terms of biological role, independently of this phosphatase activity may also function in the Wnt signaling pathway and the stabilization of beta-catenin/CTNNB1, thereby regulating cell proliferation, migration and differentiation in angiogenesis or yet in tumor growth. Also plays a role in integrin-mediated cell-cell adhesion in angiogenesis. The sequence is that of Phospholipid phosphatase 3 from Bos taurus (Bovine).